The chain runs to 292 residues: Probable E3 ubiquitin-protein ligase RNF144A (292 aa).

The interval 16–236 is TRIAD supradomain; that stretch reads PLVSCKLCLG…YDKGPCRNKL (221 aa). Zn(2+) is bound by residues Cys20, Cys23, Cys43, Cys46, Cys111, Cys116, Cys135, Cys138, Cys143, Cys146, His151, Cys156, Cys185, and Cys188. The RING-type 1 zinc-finger motif lies at 20 to 70; sequence CKLCLGEYTVEQMTTIAQCQCIFCTLCLKQYVELLIKEGLETAISCPDASC. The IBR-type zinc finger occupies 91–156; it reads QKYKKLQFEK…KANWHPGQGC (66 aa). The RING-type 2; atypical zinc finger occupies 185 to 214; sequence CPKCKVYIERDEGCAQMMCKNCKHAFCWYC. The active site involves Cys198. Residues Cys203, Cys206, Cys211, Cys214, His226, and Cys232 each contribute to the Zn(2+) site. Residues 250-270 traverse the membrane as a helical segment; the sequence is VVGIFAGFGLLLLVASPFLLL.

Belongs to the RBR family. RNF144 subfamily.

The protein resides in the membrane. It catalyses the reaction [E2 ubiquitin-conjugating enzyme]-S-ubiquitinyl-L-cysteine + [acceptor protein]-L-lysine = [E2 ubiquitin-conjugating enzyme]-L-cysteine + [acceptor protein]-N(6)-ubiquitinyl-L-lysine.. The protein operates within protein modification; protein ubiquitination. In terms of biological role, E3 ubiquitin-protein ligase which accepts ubiquitin from E2 ubiquitin-conjugating enzymes ube2l3 and ube2l6 in the form of a thioester and then directly transfers the ubiquitin to targeted substrates. This Xenopus tropicalis (Western clawed frog) protein is Probable E3 ubiquitin-protein ligase RNF144A (rnf144a).